The chain runs to 513 residues: ATP synthase subunit alpha (513 aa).

169–176 is a binding site for ATP; it reads GDRQTGKT.

The protein belongs to the ATPase alpha/beta chains family. As to quaternary structure, F-type ATPases have 2 components, CF(1) - the catalytic core - and CF(0) - the membrane proton channel. CF(1) has five subunits: alpha(3), beta(3), gamma(1), delta(1), epsilon(1). CF(0) has three main subunits: a(1), b(2) and c(9-12). The alpha and beta chains form an alternating ring which encloses part of the gamma chain. CF(1) is attached to CF(0) by a central stalk formed by the gamma and epsilon chains, while a peripheral stalk is formed by the delta and b chains.

The protein resides in the cell inner membrane. The enzyme catalyses ATP + H2O + 4 H(+)(in) = ADP + phosphate + 5 H(+)(out). In terms of biological role, produces ATP from ADP in the presence of a proton gradient across the membrane. The alpha chain is a regulatory subunit. This Dichelobacter nodosus (strain VCS1703A) protein is ATP synthase subunit alpha.